The primary structure comprises 249 residues: MELNPLKKSPSSEAVRNLREASCGPVGTPTVTNDLSENIILTSLEDLHNWARLSSLWPLLYGTACCFIEFAALIGSRFDFDRFGLVPRSSPRQADLLIVAGTVTMKMAPALVRLYEQMPDPKYVIAMGACTITGGMFSADSTTAVRGVDKLIPVDLYLPGCPPRPEAIFDAVIKLRKKVANESISERSKITQTHRYLTIPHKMKRVESKVNGQYLKAKTQLIALNPSLSEEFDQSLKEVQKISEELSSN.

Cys65, Cys66, Cys130, and Cys161 together coordinate [4Fe-4S] cluster.

It belongs to the complex I 20 kDa subunit family. As to quaternary structure, NDH-1 can be composed of about 15 different subunits; different subcomplexes with different compositions have been identified which probably have different functions. Requires [4Fe-4S] cluster as cofactor.

It localises to the cellular thylakoid membrane. The enzyme catalyses a plastoquinone + NADH + (n+1) H(+)(in) = a plastoquinol + NAD(+) + n H(+)(out). It catalyses the reaction a plastoquinone + NADPH + (n+1) H(+)(in) = a plastoquinol + NADP(+) + n H(+)(out). Functionally, NDH-1 shuttles electrons from an unknown electron donor, via FMN and iron-sulfur (Fe-S) centers, to quinones in the respiratory and/or the photosynthetic chain. The immediate electron acceptor for the enzyme in this species is believed to be plastoquinone. Couples the redox reaction to proton translocation, and thus conserves the redox energy in a proton gradient. Cyanobacterial NDH-1 also plays a role in inorganic carbon-concentration. The protein is NAD(P)H-quinone oxidoreductase subunit K of Prochlorococcus marinus (strain NATL2A).